The chain runs to 522 residues: 2-isopropylmalate synthase (522 aa).

Residues 5-267 (VIIFDTTLRD…ETGINAKEIH (263 aa)) enclose the Pyruvate carboxyltransferase domain. Residues aspartate 14, histidine 202, histidine 204, and asparagine 238 each contribute to the Mn(2+) site. Residues 392–522 (QLRQLVVQSD…MHKNRELGGV (131 aa)) form a regulatory domain region.

Belongs to the alpha-IPM synthase/homocitrate synthase family. LeuA type 1 subfamily. Homodimer. It depends on Mn(2+) as a cofactor.

It localises to the cytoplasm. It catalyses the reaction 3-methyl-2-oxobutanoate + acetyl-CoA + H2O = (2S)-2-isopropylmalate + CoA + H(+). Its pathway is amino-acid biosynthesis; L-leucine biosynthesis; L-leucine from 3-methyl-2-oxobutanoate: step 1/4. In terms of biological role, catalyzes the condensation of the acetyl group of acetyl-CoA with 3-methyl-2-oxobutanoate (2-ketoisovalerate) to form 3-carboxy-3-hydroxy-4-methylpentanoate (2-isopropylmalate). This chain is 2-isopropylmalate synthase, found in Shewanella oneidensis (strain ATCC 700550 / JCM 31522 / CIP 106686 / LMG 19005 / NCIMB 14063 / MR-1).